The sequence spans 639 residues: Testicular spindle-associated protein SHCBP1L (639 aa).

Disordered stretches follow at residues 1-25 (MESDATTSEPKASVGSDSSPAEQTV) and 48-75 (VASPRPVKGKAARRRLQLPPVTQAETCD). At Ser-3 the chain carries O-acetylserine. A phosphoserine mark is found at Ser-8, Ser-19, and Ser-50. Residues 54 to 63 (VKGKAARRRL) show a composition bias toward basic residues. Positions 285–312 (IAQRFKKTLEKYKNKRVELIEYQSNIKE) form a coiled coil. 4 PbH1 repeats span residues 479–500 (SGHLTLENCLLKCEGTGVCVLT), 501–523 (GASLTITNSEITGAQGAGVELYP), 524–557 (GSIAILEGNEIHHCNNLRTSDSSKSTLGGVNMKV), and 560–582 (APKLKMTNNHIYNNNGYGVSILQ). Lys-556 carries the N6-acetyllysine modification. Lys-631 carries the post-translational modification N6-acetyllysine.

Interacts with HSPA2; this interaction may promote the recruitment of HSPA2 to the spindle. Expressed in pachytene spermatocytes and elongating spermatids inside the seminiferous tubules. Not detected in ovary (at protein level). Testis-specific.

The protein resides in the cytoplasm. It is found in the cytoskeleton. It localises to the spindle. Its function is as follows. Testis-specific spindle-associated factor that plays a role in spermatogenesis. In association with HSPA2, participates in the maintenance of spindle integrity during meiosis in male germ cells. This chain is Testicular spindle-associated protein SHCBP1L, found in Mus musculus (Mouse).